Consider the following 480-residue polypeptide: MKVLSVSSEVFPLIKTGGLADVSGALPIALKAFGVETKTLLPGYPAVMKVIRDAVIRLEFPDLLGERATVLEVQHEGLDLLILDAPAYYDRPGGPYLDPLGKDYPDNWRRFAALSLAASEIAAGLMPGWRPDLVHTHDWQAALTSVYMRYYPTPELPSVLTIHNIAFQGQFGSEIFAGLRLPAHAFTTESIEYYGTVGFLKGGLKTAHAITTVSPTYADEILTSEFGMGLEGVIASRVDDLHGIVNGIDTDIWNPATDPVVHTHYGQTTLKNREENRRSIAEFFGLDNDDAPIFCVISRLTWQKGMDIVANVADEIVAMGGKLVVLGSGEAALEGALLASASRHPGRVGVSIGYNEPMSHLMQAGCDAIIIPSRFEPCGLTQLYGLRYGCVPIVARTGGLNDTVIDANHAALAAKVATGIQFAPVTETGMLQAIRRAMHFYQDRKLWTQLQKQGMKSDVSWEKSAERYAALYSSLVSKGM.

K15 provides a ligand contact to ADP-alpha-D-glucose.

It belongs to the glycosyltransferase 1 family. Bacterial/plant glycogen synthase subfamily.

The enzyme catalyses [(1-&gt;4)-alpha-D-glucosyl](n) + ADP-alpha-D-glucose = [(1-&gt;4)-alpha-D-glucosyl](n+1) + ADP + H(+). The protein operates within glycan biosynthesis; glycogen biosynthesis. Synthesizes alpha-1,4-glucan chains using ADP-glucose. The protein is Glycogen synthase of Rhizobium johnstonii (strain DSM 114642 / LMG 32736 / 3841) (Rhizobium leguminosarum bv. viciae).